The following is a 417-amino-acid chain: NADH-quinone oxidoreductase subunit D (417 aa).

Belongs to the complex I 49 kDa subunit family. NDH-1 is composed of 14 different subunits. Subunits NuoB, C, D, E, F, and G constitute the peripheral sector of the complex.

It localises to the cell inner membrane. The catalysed reaction is a quinone + NADH + 5 H(+)(in) = a quinol + NAD(+) + 4 H(+)(out). In terms of biological role, NDH-1 shuttles electrons from NADH, via FMN and iron-sulfur (Fe-S) centers, to quinones in the respiratory chain. The immediate electron acceptor for the enzyme in this species is believed to be ubiquinone. Couples the redox reaction to proton translocation (for every two electrons transferred, four hydrogen ions are translocated across the cytoplasmic membrane), and thus conserves the redox energy in a proton gradient. The sequence is that of NADH-quinone oxidoreductase subunit D from Coxiella burnetii (strain RSA 331 / Henzerling II).